Reading from the N-terminus, the 71-residue chain is Small ribosomal subunit protein bS21 (71 aa).

It belongs to the bacterial ribosomal protein bS21 family.

The chain is Small ribosomal subunit protein bS21 from Blochmanniella pennsylvanica (strain BPEN).